The chain runs to 446 residues: Tubulin beta-5 chain (446 aa).

Positions 1 to 4 (MREI) match the MREI motif motif. GTP is bound by residues glutamine 11, glutamate 69, serine 138, glycine 142, threonine 143, glycine 144, asparagine 204, and asparagine 226. Glutamate 69 is a Mg(2+) binding site. Glutamate 438 carries the post-translational modification 5-glutamyl polyglutamate.

Belongs to the tubulin family. As to quaternary structure, dimer of alpha and beta chains. A typical microtubule is a hollow water-filled tube with an outer diameter of 25 nm and an inner diameter of 15 nM. Alpha-beta heterodimers associate head-to-tail to form protofilaments running lengthwise along the microtubule wall with the beta-tubulin subunit facing the microtubule plus end conferring a structural polarity. Microtubules usually have 13 protofilaments but different protofilament numbers can be found in some organisms and specialized cells. Mg(2+) serves as cofactor. Some glutamate residues at the C-terminus are polyglycylated, resulting in polyglycine chains on the gamma-carboxyl group. Glycylation is mainly limited to tubulin incorporated into axonemes (cilia and flagella) whereas glutamylation is prevalent in neuronal cells, centrioles, axonemes, and the mitotic spindle. Both modifications can coexist on the same protein on adjacent residues, and lowering polyglycylation levels increases polyglutamylation, and reciprocally. The precise function of polyglycylation is still unclear. Post-translationally, some glutamate residues at the C-terminus are polyglutamylated, resulting in polyglutamate chains on the gamma-carboxyl group. Polyglutamylation plays a key role in microtubule severing by spastin (SPAST). SPAST preferentially recognizes and acts on microtubules decorated with short polyglutamate tails: severing activity by SPAST increases as the number of glutamates per tubulin rises from one to eight, but decreases beyond this glutamylation threshold.

The protein localises to the cytoplasm. The protein resides in the cytoskeleton. Its function is as follows. Tubulin is the major constituent of microtubules, a cylinder consisting of laterally associated linear protofilaments composed of alpha- and beta-tubulin heterodimers. Microtubules grow by the addition of GTP-tubulin dimers to the microtubule end, where a stabilizing cap forms. Below the cap, tubulin dimers are in GDP-bound state, owing to GTPase activity of alpha-tubulin. In Gallus gallus (Chicken), this protein is Tubulin beta-5 chain.